Here is a 462-residue protein sequence, read N- to C-terminus: Syringate O-demethylase (462 aa).

Belongs to the GcvT family.

It catalyses the reaction syringate + (6S)-5,6,7,8-tetrahydrofolate = 3-O-methylgallate + (6S)-5-methyl-5,6,7,8-tetrahydrofolate. It participates in secondary metabolite metabolism; lignin degradation. Functionally, involved in the catabolism of syringate. Catalyzes the conversion of syringate to 3-O-methylgallate (3MGA) in the presence of tetrahydrofolate. Has weak activity with vanillate and 3-O-methylgallate. This Sphingobium sp. (strain NBRC 103272 / SYK-6) protein is Syringate O-demethylase.